Here is a 606-residue protein sequence, read N- to C-terminus: Chaperone protein DnaK (606 aa).

Thr-174 is subject to Phosphothreonine; by autocatalysis. Over residues 579-593 (ASAAGNPGQGQTNEN) the composition is skewed to polar residues. The interval 579 to 606 (ASAAGNPGQGQTNENPGGKTIDGDYKVN) is disordered.

The protein belongs to the heat shock protein 70 family.

Its function is as follows. Acts as a chaperone. This is Chaperone protein DnaK from Dictyoglomus thermophilum (strain ATCC 35947 / DSM 3960 / H-6-12).